Consider the following 471-residue polypeptide: Alpha-galactosidase 1 (471 aa).

Positions 1-18 (MFAFYFLTACISLKGVFG) are cleaved as a signal peptide. Cys-42 and Cys-74 form a disulfide bridge. Substrate contacts are provided by Asp-72 and Asp-73. Asn-105 carries an N-linked (GlcNAc...) asparagine glycan. The cysteines at positions 121 and 151 are disulfide-linked. Lys-147 provides a ligand contact to substrate. Asp-149 functions as the Nucleophile in the catalytic mechanism. N-linked (GlcNAc...) asparagine glycosylation occurs at Asn-175. A substrate-binding site is contributed by Arg-205. Asp-209 serves as the catalytic Proton donor. 2 cysteine pairs are disulfide-bonded: Cys-221-Cys-237 and Cys-223-Cys-230. Gln-251 serves as a coordination point for substrate. Residues Asn-270, Asn-370, Asn-403, Asn-413, Asn-422, Asn-435, and Asn-454 are each glycosylated (N-linked (GlcNAc...) asparagine).

Belongs to the glycosyl hydrolase 27 family. Homotetramer.

Its subcellular location is the secreted. The enzyme catalyses Hydrolysis of terminal, non-reducing alpha-D-galactose residues in alpha-D-galactosides, including galactose oligosaccharides, galactomannans and galactolipids.. The chain is Alpha-galactosidase 1 (MEL1) from Saccharomyces cerevisiae (Baker's yeast).